The following is a 211-amino-acid chain: Ribosomal RNA small subunit methyltransferase G (211 aa).

Residues glycine 73, 126–127 (IE), and arginine 142 each bind S-adenosyl-L-methionine.

This sequence belongs to the methyltransferase superfamily. RNA methyltransferase RsmG family.

Its subcellular location is the cytoplasm. The enzyme catalyses guanosine(527) in 16S rRNA + S-adenosyl-L-methionine = N(7)-methylguanosine(527) in 16S rRNA + S-adenosyl-L-homocysteine. In terms of biological role, specifically methylates the N7 position of guanine in position 527 of 16S rRNA. The protein is Ribosomal RNA small subunit methyltransferase G of Methylorubrum extorquens (strain PA1) (Methylobacterium extorquens).